Consider the following 80-residue polypeptide: Exodeoxyribonuclease 7 small subunit (80 aa).

This sequence belongs to the XseB family. Heterooligomer composed of large and small subunits.

The protein localises to the cytoplasm. The catalysed reaction is Exonucleolytic cleavage in either 5'- to 3'- or 3'- to 5'-direction to yield nucleoside 5'-phosphates.. In terms of biological role, bidirectionally degrades single-stranded DNA into large acid-insoluble oligonucleotides, which are then degraded further into small acid-soluble oligonucleotides. In Rickettsia africae (strain ESF-5), this protein is Exodeoxyribonuclease 7 small subunit.